Reading from the N-terminus, the 315-residue chain is Thioredoxin reductase (315 aa).

45–52 (EGSTPGGK) is a binding site for FAD. Cysteines 145 and 148 form a disulfide. 288 to 297 (DCRSKHFRQI) contributes to the FAD binding site.

This sequence belongs to the class-II pyridine nucleotide-disulfide oxidoreductase family. As to quaternary structure, homodimer. Requires FAD as cofactor.

It localises to the cytoplasm. It carries out the reaction [thioredoxin]-dithiol + NADP(+) = [thioredoxin]-disulfide + NADPH + H(+). The chain is Thioredoxin reductase (trxB) from Mycoplasma pneumoniae (strain ATCC 29342 / M129 / Subtype 1) (Mycoplasmoides pneumoniae).